We begin with the raw amino-acid sequence, 356 residues long: Malate dehydrogenase, glyoxysomal (356 aa).

A glyoxysome-targeting transit peptide spans 1–36; it reads MQPIPDVNQRIARISAHLHPPKYQMEESSVLRRANC. Residues 51–57 and aspartate 77 each bind NAD(+); that span reads GAAGGIG. 2 residues coordinate substrate: arginine 124 and arginine 130. Residues asparagine 137 and 160–162 each bind NAD(+); that span reads ISN. Substrate contacts are provided by asparagine 162 and arginine 196. Histidine 220 acts as the Proton acceptor in catalysis. Position 271 (methionine 271) interacts with NAD(+).

Belongs to the LDH/MDH superfamily. MDH type 1 family. Homodimer.

It is found in the glyoxysome. It catalyses the reaction (S)-malate + NAD(+) = oxaloacetate + NADH + H(+). This Cucumis sativus (Cucumber) protein is Malate dehydrogenase, glyoxysomal (MDHG).